We begin with the raw amino-acid sequence, 369 residues long: Ubiquitin-conjugating enzyme E2 Q2 (369 aa).

The segment at 117–143 (DQPLPTGQNGTTEEVTSEEEEEEEMAE) is disordered. Residues 131-143 (VTSEEEEEEEMAE) are compositionally biased toward acidic residues. One can recognise a UBC core domain in the interval 198–362 (QASDRLMKEL…VQIHEKNGWY (165 aa)). The active-site Glycyl thioester intermediate is the Cys-298.

It belongs to the ubiquitin-conjugating enzyme family. Post-translationally, auto-ubiquitinated in vitro. As to expression, detected at embryo implantation sites in the luminal epithelium of pregnant endometrium. Detected at low levels in ovary and liver.

The protein localises to the cytoplasm. It catalyses the reaction S-ubiquitinyl-[E1 ubiquitin-activating enzyme]-L-cysteine + [E2 ubiquitin-conjugating enzyme]-L-cysteine = [E1 ubiquitin-activating enzyme]-L-cysteine + S-ubiquitinyl-[E2 ubiquitin-conjugating enzyme]-L-cysteine.. Its pathway is protein modification; protein ubiquitination. Functionally, accepts ubiquitin from the E1 complex and catalyzes its covalent attachment to other proteins. In vitro catalyzes 'Lys-48'-linked polyubiquitination. This Oryctolagus cuniculus (Rabbit) protein is Ubiquitin-conjugating enzyme E2 Q2 (UBE2Q2).